A 489-amino-acid polypeptide reads, in one-letter code: Protein TOS4 (489 aa).

Polar residues-rich tracts occupy residues 1 to 10 (MSSQFPSSPY) and 20 to 32 (NYKQQPNCPSSNY). Residues 1 to 101 (MSSQFPSSPY…FSSKLSSPSR (101 aa)) are disordered. The residue at position 40 (S40) is a Phosphoserine. Positions 56–68 (PSSSIGRVSSPVR) are enriched in polar residues. Over residues 89-100 (SPKFSSKLSSPS) the composition is skewed to low complexity. S100 carries the phosphoserine modification. Residues 118–170 (ITVGRNSSQCDVALCKNKFISRVHASITYLPQTNEVKIHCFSMNGLIVTYRKQ) form the FHA domain. A disordered region spans residues 316-366 (SSPLSSVSSVDHEEQTLRQDSLSSDKNPMTMKKPKLNKRVLPSKPKKSVKE). Positions 333 to 342 (RQDSLSSDKN) are enriched in polar residues.

Belongs to the PLM2/TOS4 family. Post-translationally, phosphorylated by CDC28.

The protein resides in the nucleus. Functionally, binds to the promoters of genes with functions important for the G1/S (start) transition; primarily genes involved in pheromone response, polarized growth and transcription. This chain is Protein TOS4 (TOS4), found in Saccharomyces cerevisiae (strain ATCC 204508 / S288c) (Baker's yeast).